Consider the following 116-residue polypeptide: S-adenosylmethionine decarboxylase proenzyme (116 aa).

S62 serves as the catalytic Schiff-base intermediate with substrate; via pyruvic acid. S62 is subject to Pyruvic acid (Ser); by autocatalysis. H67 serves as the catalytic Proton acceptor; for processing activity. The Proton donor; for catalytic activity role is filled by C82.

This sequence belongs to the prokaryotic AdoMetDC family. Type 1 subfamily. In terms of assembly, heterotetramer of two alpha and two beta chains arranged as a dimer of alpha/beta heterodimers. Pyruvate serves as cofactor. Is synthesized initially as an inactive proenzyme. Formation of the active enzyme involves a self-maturation process in which the active site pyruvoyl group is generated from an internal serine residue via an autocatalytic post-translational modification. Two non-identical subunits are generated from the proenzyme in this reaction, and the pyruvate is formed at the N-terminus of the alpha chain, which is derived from the carboxyl end of the proenzyme. The post-translation cleavage follows an unusual pathway, termed non-hydrolytic serinolysis, in which the side chain hydroxyl group of the serine supplies its oxygen atom to form the C-terminus of the beta chain, while the remainder of the serine residue undergoes an oxidative deamination to produce ammonia and the pyruvoyl group blocking the N-terminus of the alpha chain.

The catalysed reaction is S-adenosyl-L-methionine + H(+) = S-adenosyl 3-(methylsulfanyl)propylamine + CO2. Its pathway is amine and polyamine biosynthesis; S-adenosylmethioninamine biosynthesis; S-adenosylmethioninamine from S-adenosyl-L-methionine: step 1/1. Its function is as follows. Catalyzes the decarboxylation of S-adenosylmethionine to S-adenosylmethioninamine (dcAdoMet), the propylamine donor required for the synthesis of the polyamines spermine and spermidine from the diamine putrescine. The polypeptide is S-adenosylmethionine decarboxylase proenzyme (Thermomicrobium roseum (strain ATCC 27502 / DSM 5159 / P-2)).